The following is a 209-amino-acid chain: Large ribosomal subunit protein uL3 (209 aa).

Residues 118–151 are disordered; it reads GFQGAIKRHGQSRGPMSHGSRYHRRPGSMGPVAP.

Belongs to the universal ribosomal protein uL3 family. Part of the 50S ribosomal subunit. Forms a cluster with proteins L14 and L19.

One of the primary rRNA binding proteins, it binds directly near the 3'-end of the 23S rRNA, where it nucleates assembly of the 50S subunit. This Enterococcus faecalis (strain ATCC 700802 / V583) protein is Large ribosomal subunit protein uL3.